Here is a 79-residue protein sequence, read N- to C-terminus: Acyl carrier protein (79 aa).

The 76-residue stretch at 2-77 (STIEERVKKI…QAIDYVKVHV (76 aa)) folds into the Carrier domain. Position 37 is an O-(pantetheine 4'-phosphoryl)serine (S37).

Belongs to the acyl carrier protein (ACP) family. In terms of processing, 4'-phosphopantetheine is transferred from CoA to a specific serine of apo-ACP by AcpS. This modification is essential for activity because fatty acids are bound in thioester linkage to the sulfhydryl of the prosthetic group.

Its subcellular location is the cytoplasm. It participates in lipid metabolism; fatty acid biosynthesis. Its function is as follows. Carrier of the growing fatty acid chain in fatty acid biosynthesis. The chain is Acyl carrier protein from Xanthomonas albilineans.